The following is a 282-amino-acid chain: Undecaprenyl-diphosphatase (282 aa).

Transmembrane regions (helical) follow at residues Met-1 to Val-21, Gly-40 to Tyr-60, Ala-85 to Phe-105, Tyr-117 to Val-137, Phe-196 to Thr-216, Ala-229 to Ile-249, and Ser-258 to Gly-278.

This sequence belongs to the UppP family.

It is found in the cell inner membrane. The catalysed reaction is di-trans,octa-cis-undecaprenyl diphosphate + H2O = di-trans,octa-cis-undecaprenyl phosphate + phosphate + H(+). Catalyzes the dephosphorylation of undecaprenyl diphosphate (UPP). Confers resistance to bacitracin. The protein is Undecaprenyl-diphosphatase of Chlorobium phaeobacteroides (strain DSM 266 / SMG 266 / 2430).